The following is a 243-amino-acid chain: DNA repair protein RecO (243 aa).

The protein belongs to the RecO family.

Functionally, involved in DNA repair and RecF pathway recombination. This is DNA repair protein RecO from Vibrio vulnificus (strain CMCP6).